A 677-amino-acid polypeptide reads, in one-letter code: UvrABC system protein B (677 aa).

The Helicase ATP-binding domain occupies 27–414; that stretch reads ANLGHGVRDQ…SQGVIAEQII (388 aa). ATP is bound at residue 40–47; the sequence is GVTGSGKT. The Beta-hairpin signature appears at 93–116; that stretch reads YYDYYQPEAYVPASDTYIEKDSSI. One can recognise a Helicase C-terminal domain in the interval 432–594; the sequence is QVDDLLAECR…IEPRTIRKSL (163 aa). Residues 638-673 enclose the UVR domain; it reads AKHIQKLEREMREAAKELEFERAATLRDRIRLLRER.

It belongs to the UvrB family. Forms a heterotetramer with UvrA during the search for lesions. Interacts with UvrC in an incision complex.

Its subcellular location is the cytoplasm. Functionally, the UvrABC repair system catalyzes the recognition and processing of DNA lesions. A damage recognition complex composed of 2 UvrA and 2 UvrB subunits scans DNA for abnormalities. Upon binding of the UvrA(2)B(2) complex to a putative damaged site, the DNA wraps around one UvrB monomer. DNA wrap is dependent on ATP binding by UvrB and probably causes local melting of the DNA helix, facilitating insertion of UvrB beta-hairpin between the DNA strands. Then UvrB probes one DNA strand for the presence of a lesion. If a lesion is found the UvrA subunits dissociate and the UvrB-DNA preincision complex is formed. This complex is subsequently bound by UvrC and the second UvrB is released. If no lesion is found, the DNA wraps around the other UvrB subunit that will check the other stand for damage. This chain is UvrABC system protein B, found in Nitratidesulfovibrio vulgaris (strain ATCC 29579 / DSM 644 / CCUG 34227 / NCIMB 8303 / VKM B-1760 / Hildenborough) (Desulfovibrio vulgaris).